The chain runs to 522 residues: ARS-binding protein 1 (522 aa).

The region spanning 70-144 (DVKRNRPPKY…RKRHILHAIN (75 aa)) is the HTH CENPB-type domain. Threonine 460 carries the post-translational modification Phosphothreonine.

In terms of assembly, interacts with mcm10.

Its subcellular location is the nucleus. Its function is as follows. Binds, preferentially, to the Maundrell ARS consensus sequence within ARS3002. The sequence is that of ARS-binding protein 1 (abp1) from Schizosaccharomyces pombe (strain 972 / ATCC 24843) (Fission yeast).